The chain runs to 112 residues: MTDQEFLDLAERLLLAVEQDCDRINDETDADLDAQRVGGMVTLVFANRSQIVINQQKPLHEIWLAAKAGGFHYRYDAAQGAWLDTKGAGEFFANLSRYATEQSGLALQFSAR.

It belongs to the frataxin family.

Functionally, involved in iron-sulfur (Fe-S) cluster assembly. May act as a regulator of Fe-S biogenesis. This is Iron-sulfur cluster assembly protein CyaY from Delftia acidovorans (strain DSM 14801 / SPH-1).